A 318-amino-acid chain; its full sequence is SPX domain-containing protein 4 (318 aa).

The SPX domain maps to 1-187; that stretch reads MKFGKEFRTH…GGLLRLPFTQ (187 aa). The segment covering 226 to 237 has biased composition (low complexity); the sequence is SAVQAHSSSHQH. 2 disordered regions span residues 226 to 247 and 284 to 318; these read SAVQAHSSSHQHNSPRISAETS and SSLLQNEDDETVTAENSPNSGNKDDSEKEDTGPSH. Over residues 305–318 the composition is skewed to basic and acidic residues; sequence NKDDSEKEDTGPSH.

The chain is SPX domain-containing protein 4 (SPX4) from Arabidopsis thaliana (Mouse-ear cress).